Consider the following 232-residue polypeptide: Ion-translocating oxidoreductase complex subunit E (232 aa).

The next 6 membrane-spanning stretches (helical) occupy residues 18-38, 39-59, 69-89, 93-113, 127-147, and 182-202; these read GLVQLLGLCPLLAVTATLTNA, LGLGVATMLVLIGSNILVSLV, IPVFVMIIAALVTAVQLLINA, GLYLSLGIFLPLIVTNCIIIG, AAFDGLMMGLGFTLVLAVLGA, and PFLLAMLPPGAFIVMGLLIAL.

Belongs to the NqrDE/RnfAE family. The complex is composed of six subunits: RnfA, RnfB, RnfC, RnfD, RnfE and RnfG.

Its subcellular location is the cell inner membrane. Its function is as follows. Part of a membrane-bound complex that couples electron transfer with translocation of ions across the membrane. The sequence is that of Ion-translocating oxidoreductase complex subunit E from Shewanella sp. (strain ANA-3).